The following is a 416-amino-acid chain: Tyrosine--tRNA ligase (416 aa).

Tyr40 lines the L-tyrosine pocket. The short motif at 45–54 (ATAASLHVGH) is the 'HIGH' region element. 2 residues coordinate L-tyrosine: Tyr177 and Gln181. Positions 237–241 (KMGKS) match the 'KMSKS' region motif. Position 240 (Lys240) interacts with ATP. The S4 RNA-binding domain maps to 351–416 (LSVTHFLVAA…RKKHKLVRLA (66 aa)).

The protein belongs to the class-I aminoacyl-tRNA synthetase family. TyrS type 1 subfamily. As to quaternary structure, homodimer.

The protein resides in the cytoplasm. The enzyme catalyses tRNA(Tyr) + L-tyrosine + ATP = L-tyrosyl-tRNA(Tyr) + AMP + diphosphate + H(+). Functionally, catalyzes the attachment of tyrosine to tRNA(Tyr) in a two-step reaction: tyrosine is first activated by ATP to form Tyr-AMP and then transferred to the acceptor end of tRNA(Tyr). This is Tyrosine--tRNA ligase from Cereibacter sphaeroides (strain ATCC 17025 / ATH 2.4.3) (Rhodobacter sphaeroides).